The primary structure comprises 412 residues: Autophagy-related protein 18 (412 aa).

WD repeat units lie at residues 100–139, 142–183, and 186–226; these read RFNK…NIMD, TNKL…SVST, and AHEG…RLFE. Residues 227-230 carry the L/FRRG motif motif; the sequence is FRRG. The WD 4 repeat unit spans residues 232 to 271; sequence TRCVNIYSLCFSSDSKYLTSSSNTETVHVFKLEKTEGVDN. Residues 363 to 412 form a disordered region; it reads HNIGPKSDTSRASPTSTGSGGAAKSAEASNQSVPNMDDPDDFPPMSHTSG. Low complexity predominate over residues 372–391; it reads SRASPTSTGSGGAAKSAEAS.

It belongs to the WD repeat PROPPIN family. As to expression, expressed in neurons and intestinal cells.

The protein resides in the cytoplasmic vesicle. The protein localises to the phagosome membrane. It is found in the cytoplasm. Its function is as follows. Component of the autophagy machinery that is recruited to phosphatidylinositols on preautophagosomal structures, which are early autophagic structures, to promote autophagosome formation, and the subsequent degradation and clearance of engulfed apoptotic cells and P-granules in somatic cells. In particular, binds with high affinity to phosphatidylinositols including phosphatidylinositol 3-phosphate (PtdIns(3)P), phosphatidylinositol 4-phosphate (PtdIns(4)P), and phosphatidylinositol 5-phosphate (PtdIns(5)P), and more weakly to phosphatidylinositol 3,5-bisphosphate (PtdIns(3,5)P2). Plays a role in mitophagy, which is the autophagic consumption of mitochondria, in response to dietary restriction. Involved in xenophagy, the autophagy-mediated degradation of pathogens and pathogen products, such as toxins. Also plays a role in membrane-pore repair. In a daf-18/PTEN- and daf-16/FOXO-dependent manner, required for the proliferation of germ stem cell progenitors in the gonad during the late phases of larval development. By regulating the release of neurotransmitters and neuropeptides, involved in the control of lifespan in response to dietary restriction and daf-2 signaling. Probably through its involvement in autophagy, required for dauer formation. The polypeptide is Autophagy-related protein 18 (Caenorhabditis elegans).